Reading from the N-terminus, the 167-residue chain is Small ribosomal subunit protein uS5 (167 aa).

Positions 12–75 (LQEKLITVNR…EQARRNMITI (64 aa)) constitute an S5 DRBM domain.

The protein belongs to the universal ribosomal protein uS5 family. In terms of assembly, part of the 30S ribosomal subunit. Contacts proteins S4 and S8.

In terms of biological role, with S4 and S12 plays an important role in translational accuracy. Located at the back of the 30S subunit body where it stabilizes the conformation of the head with respect to the body. The protein is Small ribosomal subunit protein uS5 of Buchnera aphidicola subsp. Acyrthosiphon pisum (strain APS) (Acyrthosiphon pisum symbiotic bacterium).